The sequence spans 104 residues: L-rhamnose mutarotase (104 aa).

A substrate-binding site is contributed by Tyr-18. His-22 serves as the catalytic Proton donor. Residues Tyr-41 and 76 to 77 each bind substrate; that span reads WW.

The protein belongs to the rhamnose mutarotase family. As to quaternary structure, homodimer.

It localises to the cytoplasm. It carries out the reaction alpha-L-rhamnose = beta-L-rhamnose. The protein operates within carbohydrate metabolism; L-rhamnose metabolism. Involved in the anomeric conversion of L-rhamnose. The protein is L-rhamnose mutarotase of Lactiplantibacillus plantarum (strain ATCC BAA-793 / NCIMB 8826 / WCFS1) (Lactobacillus plantarum).